A 157-amino-acid polypeptide reads, in one-letter code: ABA-responsive protein ABR17 (157 aa).

Belongs to the BetVI family.

The protein is ABA-responsive protein ABR17 of Pisum sativum (Garden pea).